Reading from the N-terminus, the 415-residue chain is Mitochondrial tRNA-specific 2-thiouridylase 1 (415 aa).

ATP is bound by residues 37–44 and Met63; that span reads AMSGGVDS. Residues 124-126 form an interaction with target base in tRNA region; sequence NPD. Cys129 serves as the catalytic Nucleophile. A disulfide bond links Cys129 and Cys234. An ATP-binding site is contributed by Gly159. Residues 183-185 are interaction with tRNA; the sequence is KDQ. Cys234 acts as the Cysteine persulfide intermediate in catalysis. The tract at residues 356 to 357 is interaction with tRNA; the sequence is RH.

The protein belongs to the MnmA/TRMU family.

It localises to the mitochondrion. It catalyses the reaction 5-taurinomethyluridine(34) in tRNA + S-sulfanyl-L-cysteinyl-[protein] + AH2 + ATP = 5-taurinomethyl-2-thiouridine(34) in tRNA + L-cysteinyl-[protein] + A + AMP + diphosphate + H(+). In terms of biological role, catalyzes the 2-thiolation of uridine at the wobble position (U34) of mitochondrial tRNA(Lys), tRNA(Glu) and tRNA(Gln). Required for the formation of 5-taurinomethyl-2-thiouridine (tm5s2U) of mitochondrial tRNA(Lys), tRNA(Glu), and tRNA(Gln) at the wobble position. ATP is required to activate the C2 atom of the wobble base. The protein is Mitochondrial tRNA-specific 2-thiouridylase 1 of Schizosaccharomyces pombe (strain 972 / ATCC 24843) (Fission yeast).